The sequence spans 134 residues: MKAFSPVRSVRKNSLSDHGLGISRSKTPVDDPMSLLYNMNDCYSKLKELVPSIPQNKKVSKMEILQHVIDYILDLQIALDSHPTIVSLHHQRPGQSQASRTPLTTLNTDISILSLQASEFPSELMSNDSKALCG.

The tract at residues 1–24 is disordered; the sequence is MKAFSPVRSVRKNSLSDHGLGISR. Phosphoserine is present on residues Ser14 and Ser25. Residues 23–75 enclose the bHLH domain; sequence SRSKTPVDDPMSLLYNMNDCYSKLKELVPSIPQNKKVSKMEILQHVIDYILDL. The Nuclear export signal motif lies at 106–115; it reads LNTDISILSL.

As to quaternary structure, interacts with GATA4 and NKX2-5. Interacts with NR0B2. Interacts with CLOCK and BMAL1. Interacts with IFI204. Interacts with NEDD9/HEF1. Interacts with ASB4; this interaction promotes ID2 proteasomal degradation. Post-translationally, ubiquitinated in a ASB4-depedent manner, leading to proteasomal degradation. Phosphorylated in vitro by CDK1, PKA and PKC.

The protein localises to the cytoplasm. Its subcellular location is the nucleus. Its function is as follows. Transcriptional regulator (lacking a basic DNA binding domain) which negatively regulates the basic helix-loop-helix (bHLH) transcription factors by forming heterodimers and inhibiting their DNA binding and transcriptional activity. Implicated in regulating a variety of cellular processes, including cellular growth, senescence, differentiation, apoptosis, angiogenesis, and neoplastic transformation. Inhibits skeletal muscle and cardiac myocyte differentiation. Regulates the circadian clock by repressing the transcriptional activator activity of the CLOCK-BMAL1 heterodimer. Restricts the CLOCK and BMAL1 localization to the cytoplasm. Plays a role in both the input and output pathways of the circadian clock: in the input component, is involved in modulating the magnitude of photic entrainment and in the output component, contributes to the regulation of a variety of liver clock-controlled genes involved in lipid metabolism. This chain is DNA-binding protein inhibitor ID-2 (ID2), found in Bos taurus (Bovine).